A 270-amino-acid chain; its full sequence is ATP synthase subunit a (270 aa).

Helical transmembrane passes span 29–49, 87–107, 108–128, 140–160, 182–202, 220–240, and 241–261; these read VDTFSISLVLGFLFAAVFAMV, IAPLALTIFCWVFLMNFMDLF, PVDLFPMAAQWIGYTFFGLEP, DVNATFAMSLSVLILIVGFSI, PVGAIILAPLNFAFQLVELAA, LIFILIALLPWGLQWVLGAPW, and AIFHILIITLQAFVFMMLTIV.

The protein belongs to the ATPase A chain family. In terms of assembly, F-type ATPases have 2 components, CF(1) - the catalytic core - and CF(0) - the membrane proton channel. CF(1) has five subunits: alpha(3), beta(3), gamma(1), delta(1), epsilon(1). CF(0) has three main subunits: a(1), b(2) and c(9-12). The alpha and beta chains form an alternating ring which encloses part of the gamma chain. CF(1) is attached to CF(0) by a central stalk formed by the gamma and epsilon chains, while a peripheral stalk is formed by the delta and b chains.

The protein localises to the cell inner membrane. Key component of the proton channel; it plays a direct role in the translocation of protons across the membrane. In Chromobacterium violaceum (strain ATCC 12472 / DSM 30191 / JCM 1249 / CCUG 213 / NBRC 12614 / NCIMB 9131 / NCTC 9757 / MK), this protein is ATP synthase subunit a.